The chain runs to 616 residues: Glycogenin-1 (616 aa).

Residues leucine 10, tyrosine 16, and arginine 95 each contribute to the UDP site. Residues leucine 10, tyrosine 16, arginine 95, lysine 104, aspartate 120, aspartate 122, asparagine 158, serine 159, aspartate 185, aspartate 188, and glutamine 189 each coordinate UDP-alpha-D-glucose. UDP is bound by residues aspartate 120 and aspartate 122. Residues aspartate 120 and aspartate 122 each coordinate Mn(2+). An O-linked (Glc...) tyrosine glycan is attached at tyrosine 230. The UDP site is built by histidine 247, glycine 250, and lysine 253. Histidine 247 provides a ligand contact to Mn(2+). Glycine 250 and lysine 253 together coordinate UDP-alpha-D-glucose. Over residues 283–302 the composition is skewed to basic and acidic residues; that stretch reads HQLNNEVSKPKISDSDKTET. 4 disordered regions span residues 283-320, 335-354, 371-525, and 553-588; these read HQLN…PTTN, NQNA…NPVP, TNQP…EKDK, and RDAT…EMPN. Basic and acidic residues predominate over residues 377 to 386; that stretch reads ESREYSKEND. The span at 400 to 419 shows a compositional bias: polar residues; sequence SPPNSTQELNSSYSVVSTQA. The span at 450 to 461 shows a compositional bias: low complexity; that stretch reads STAASSNNNVSN. 2 stretches are compositionally biased toward polar residues: residues 462 to 485 and 492 to 503; these read QPDG…PSNP and DNIQKPSVSTND. The segment covering 567–576 has biased composition (basic and acidic residues); that stretch reads DKQEDMKLTA. The segment covering 577–586 has biased composition (polar residues); it reads EETNQPQQEM. Tyrosine 598 is a glycosylation site (O-linked (Glc...) tyrosine).

Belongs to the glycosyltransferase 8 family. Glycogenin subfamily. It depends on Mn(2+) as a cofactor.

The protein localises to the cytoplasm. Its subcellular location is the vacuole. The catalysed reaction is L-tyrosyl-[glycogenin] + UDP-alpha-D-glucose = alpha-D-glucosyl-L-tyrosyl-[glycogenin] + UDP + H(+). The enzyme catalyses [1,4-alpha-D-glucosyl](n)-L-tyrosyl-[glycogenin] + UDP-alpha-D-glucose = [1,4-alpha-D-glucosyl](n+1)-L-tyrosyl-[glycogenin] + UDP + H(+). Self-glucosylating initiator of glycogen synthesis. It catalyzes the formation of a short alpha (1,4)-glucosyl chain covalently attached via a glucose 1-O-tyrosyl linkage to internal tyrosine residues and these chains act as primers for the elongation reaction catalyzed by glycogen synthase. Capable of transferring glucosyl residues to unbound acceptors such as free oligoglucans or oligoglucan derivatives. In Saccharomyces cerevisiae (strain ATCC 204508 / S288c) (Baker's yeast), this protein is Glycogenin-1.